Here is a 334-residue protein sequence, read N- to C-terminus: Protein NlpD/LppB homolog (334 aa).

The LysM domain occupies 89 to 133 (IFYIVKSKDTMYSIAKNSGYNYHELSKFNSIKKPYKIIIGQKIWM).

It belongs to the E.coli NlpD/Haemophilus LppB family.

The protein is Protein NlpD/LppB homolog of Buchnera aphidicola subsp. Acyrthosiphon pisum (strain APS) (Acyrthosiphon pisum symbiotic bacterium).